A 588-amino-acid polypeptide reads, in one-letter code: Adenine deaminase (588 aa).

This sequence belongs to the metallo-dependent hydrolases superfamily. Adenine deaminase family. Mn(2+) is required as a cofactor.

It catalyses the reaction adenine + H2O + H(+) = hypoxanthine + NH4(+). This chain is Adenine deaminase, found in Desulforamulus reducens (strain ATCC BAA-1160 / DSM 100696 / MI-1) (Desulfotomaculum reducens).